The primary structure comprises 313 residues: B3 domain-containing protein At2g31720 (313 aa).

The interval 80–110 (KNQDPEQNPNRVASSPSSCHLESKRPQKVVS) is disordered. The span at 84 to 99 (PEQNPNRVASSPSSCH) shows a compositional bias: polar residues. Positions 169-267 (WKQILDMDFL…MLFFAFVLSD (99 aa)) form a DNA-binding region, TF-B3.

It is found in the nucleus. In Arabidopsis thaliana (Mouse-ear cress), this protein is B3 domain-containing protein At2g31720 (ARF70).